Reading from the N-terminus, the 594-residue chain is Interactor of HORMAD1 protein 1 (594 aa).

Coiled-coil stretches lie at residues 109-135 (VGKSKGLLEQFEEKKKRAKDKCDSETL), 165-189 (QSILDSLETVAKTLQETIQAQNDLV), and 219-245 (EMKSNLKHLEVLVAQQSQEFQQLCEQL). Positions 434-443 (VEMRGKDKKQ) are enriched in basic and acidic residues. The interval 434–454 (VEMRGKDKKQQPRKAHRAHRG) is disordered. The span at 444 to 454 (QPRKAHRAHRG) shows a compositional bias: basic residues. Phosphoserine is present on residues serine 588 and serine 589.

As to quaternary structure, part of the MCD recombinosome complex, at least composed of IHO1, REC114 and MEI4. Interacts with REC114. Interacts with MEI4. Interacts with HORMAD1. Interacts with ANKRD31.

Its subcellular location is the chromosome. Its function is as follows. Required for DNA double-strand breaks (DSBs) formation in unsynapsed regions during meiotic recombination. Probably acts by forming a complex with MEI4 and REC114, which activates DSBs formation in unsynapsed regions, an essential step to ensure completion of synapsis. Not required for HORMAD1 functions in pairing-independent synaptonemal complex formation, ATR recruitment to unsynapsed axes, meiotic silencing of unsynapsed chromatin (MSUC) or meiotic surveillance. This chain is Interactor of HORMAD1 protein 1, found in Homo sapiens (Human).